The sequence spans 454 residues: MCAAQMPPLAHIFRGTFVHSTWTCPMEVLRDHLLGVSDSGKIVFLEEASQQEKLAKEWCFKPCEIRELSHHEFFMPGLVDTHIHASQYSFAGSNIDLPLLEWLTKYTFPAEHRFQNTDFAEEVYTRVVRRTLKNGTTTACYFATIHTDSSLLLADITDKFGQRAFVGKVCMNLNDTFPEYNETTEESIKETERFVSEMLQRKYSRVKPIVTPRFSLSCSETLMGDLGNIAKTHDLHIQSHISENRDEVEAVKNLYPSYKNYTDVYDKNNLLTNKTVMAHGCYLSAEELNVFHERGASIAHCPNSNLSLSSGFLNVLEVLKHEVKIGLGTDVAGGYSYSMLDAIRRAVMVSNILLINKVNEKSLTLKEVFRLATLGGSQALGLDGEIGNFEVGKEFDAILINPKASDSPIDLFYGDFFGDISEAVIQKFLYLGDDRNIEEVYVGGKQVVPFSSSV.

Residues H82 and H84 each contribute to the Zn(2+) site. Residues 84 to 87 (HASQ), 213 to 214 (RF), 240 to 243 (HISE), and D330 each bind substrate. Zn(2+)-binding residues include H240 and D330. S453 bears the Phosphoserine mark.

It belongs to the metallo-dependent hydrolases superfamily. ATZ/TRZ family. Homodimer. The cofactor is Zn(2+).

It catalyses the reaction guanine + H2O + H(+) = xanthine + NH4(+). It participates in purine metabolism; guanine degradation; xanthine from guanine: step 1/1. Its function is as follows. Catalyzes the hydrolytic deamination of guanine, producing xanthine and ammonia. In Pongo abelii (Sumatran orangutan), this protein is Guanine deaminase (GDA).